Here is a 376-residue protein sequence, read N- to C-terminus: 23S rRNA (uracil(747)-C(5))-methyltransferase RlmC (376 aa).

4 residues coordinate [4Fe-4S] cluster: C3, C11, C14, and C87. 4 residues coordinate S-adenosyl-L-methionine: Q212, F241, E262, and N307. The active-site Nucleophile is the C334.

This sequence belongs to the class I-like SAM-binding methyltransferase superfamily. RNA M5U methyltransferase family. RlmC subfamily.

It carries out the reaction uridine(747) in 23S rRNA + S-adenosyl-L-methionine = 5-methyluridine(747) in 23S rRNA + S-adenosyl-L-homocysteine + H(+). Its function is as follows. Catalyzes the formation of 5-methyl-uridine at position 747 (m5U747) in 23S rRNA. The protein is 23S rRNA (uracil(747)-C(5))-methyltransferase RlmC of Salmonella choleraesuis (strain SC-B67).